Consider the following 107-residue polypeptide: Large ribosomal subunit protein uL24 (107 aa).

This sequence belongs to the universal ribosomal protein uL24 family. As to quaternary structure, part of the 50S ribosomal subunit.

Functionally, one of two assembly initiator proteins, it binds directly to the 5'-end of the 23S rRNA, where it nucleates assembly of the 50S subunit. One of the proteins that surrounds the polypeptide exit tunnel on the outside of the subunit. The sequence is that of Large ribosomal subunit protein uL24 from Thiobacillus denitrificans (strain ATCC 25259 / T1).